A 340-amino-acid chain; its full sequence is Ketol-acid reductoisomerase (NADP(+)) (340 aa).

One can recognise a KARI N-terminal Rossmann domain in the interval 3–182; sequence VQMEYEKDVK…GAARVGLLET (180 aa). Residues 26 to 29, R49, S53, and 83 to 86 each bind NADP(+); these read YGSQ and DEIQ. H108 is an active-site residue. G134 provides a ligand contact to NADP(+). One can recognise a KARI C-terminal knotted domain in the interval 183-328; the sequence is TYKEETEEDL…AELRKAMPFV (146 aa). Mg(2+) contacts are provided by D191, E195, E227, and E231. S252 is a substrate binding site.

The protein belongs to the ketol-acid reductoisomerase family. It depends on Mg(2+) as a cofactor.

It catalyses the reaction (2R)-2,3-dihydroxy-3-methylbutanoate + NADP(+) = (2S)-2-acetolactate + NADPH + H(+). The catalysed reaction is (2R,3R)-2,3-dihydroxy-3-methylpentanoate + NADP(+) = (S)-2-ethyl-2-hydroxy-3-oxobutanoate + NADPH + H(+). The protein operates within amino-acid biosynthesis; L-isoleucine biosynthesis; L-isoleucine from 2-oxobutanoate: step 2/4. It participates in amino-acid biosynthesis; L-valine biosynthesis; L-valine from pyruvate: step 2/4. In terms of biological role, involved in the biosynthesis of branched-chain amino acids (BCAA). Catalyzes an alkyl-migration followed by a ketol-acid reduction of (S)-2-acetolactate (S2AL) to yield (R)-2,3-dihydroxy-isovalerate. In the isomerase reaction, S2AL is rearranged via a Mg-dependent methyl migration to produce 3-hydroxy-3-methyl-2-ketobutyrate (HMKB). In the reductase reaction, this 2-ketoacid undergoes a metal-dependent reduction by NADPH to yield (R)-2,3-dihydroxy-isovalerate. The sequence is that of Ketol-acid reductoisomerase (NADP(+)) from Streptococcus gordonii (strain Challis / ATCC 35105 / BCRC 15272 / CH1 / DL1 / V288).